An 870-amino-acid chain; its full sequence is Translation initiation factor IF-2 (870 aa).

Residues 49–284 form a disordered region; sequence SFQNSAPAEK…TKRKERPLPE (236 aa). Composition is skewed to basic and acidic residues over residues 70–81 and 94–109; these read RKNEKKQEDNAG and QNND…RDHS. Over residues 116-127 the composition is skewed to low complexity; the sequence is KPKAAALLQQFK. Basic and acidic residues-rich tracts occupy residues 144 to 159 and 168 to 183; these read AKKE…KKEQ and NKES…EKKV. Residues 254 to 279 are compositionally biased toward basic residues; it reads RKRRKNKNKKRKQEQKPKKQITKRKE. Residues 371–540 form the tr-type G domain; that stretch reads KRPPVVTIMG…LLQADMMELK (170 aa). The interval 380–387 is G1; the sequence is GHVDHGKT. 380–387 provides a ligand contact to GTP; that stretch reads GHVDHGKT. The interval 405 to 409 is G2; the sequence is GITQK. The interval 426-429 is G3; the sequence is DTPG. GTP-binding positions include 426–430 and 480–483; these read DTPGH and NKMD. A G4 region spans residues 480-483; that stretch reads NKMD. The tract at residues 516-518 is G5; that stretch reads SAR.

The protein belongs to the TRAFAC class translation factor GTPase superfamily. Classic translation factor GTPase family. IF-2 subfamily.

Its subcellular location is the cytoplasm. One of the essential components for the initiation of protein synthesis. Protects formylmethionyl-tRNA from spontaneous hydrolysis and promotes its binding to the 30S ribosomal subunits. Also involved in the hydrolysis of GTP during the formation of the 70S ribosomal complex. The chain is Translation initiation factor IF-2 from Lactobacillus helveticus (strain DPC 4571).